Here is a 265-residue protein sequence, read N- to C-terminus: 4-hydroxy-tetrahydrodipicolinate reductase (265 aa).

NAD(+) contacts are provided by residues 7–12 and Asp33; that span reads GASGRM. Arg34 contributes to the NADP(+) binding site. NAD(+) is bound by residues 96-98 and 120-123; these read GTT and SANM. The active-site Proton donor/acceptor is the His153. A (S)-2,3,4,5-tetrahydrodipicolinate-binding site is contributed by His154. Catalysis depends on Lys157, which acts as the Proton donor. Position 163-164 (163-164) interacts with (S)-2,3,4,5-tetrahydrodipicolinate; it reads GT.

The protein belongs to the DapB family.

The protein localises to the cytoplasm. The catalysed reaction is (S)-2,3,4,5-tetrahydrodipicolinate + NAD(+) + H2O = (2S,4S)-4-hydroxy-2,3,4,5-tetrahydrodipicolinate + NADH + H(+). It carries out the reaction (S)-2,3,4,5-tetrahydrodipicolinate + NADP(+) + H2O = (2S,4S)-4-hydroxy-2,3,4,5-tetrahydrodipicolinate + NADPH + H(+). The protein operates within amino-acid biosynthesis; L-lysine biosynthesis via DAP pathway; (S)-tetrahydrodipicolinate from L-aspartate: step 4/4. Functionally, catalyzes the conversion of 4-hydroxy-tetrahydrodipicolinate (HTPA) to tetrahydrodipicolinate. This chain is 4-hydroxy-tetrahydrodipicolinate reductase, found in Burkholderia pseudomallei (strain 1106a).